Here is a 503-residue protein sequence, read N- to C-terminus: Probable cytosol aminopeptidase (503 aa).

Lys270 and Asp275 together coordinate Mn(2+). The active site involves Lys282. Residues Asp293, Asp352, and Glu354 each contribute to the Mn(2+) site. Arg356 is a catalytic residue.

It belongs to the peptidase M17 family. It depends on Mn(2+) as a cofactor.

The protein localises to the cytoplasm. The enzyme catalyses Release of an N-terminal amino acid, Xaa-|-Yaa-, in which Xaa is preferably Leu, but may be other amino acids including Pro although not Arg or Lys, and Yaa may be Pro. Amino acid amides and methyl esters are also readily hydrolyzed, but rates on arylamides are exceedingly low.. It catalyses the reaction Release of an N-terminal amino acid, preferentially leucine, but not glutamic or aspartic acids.. In terms of biological role, presumably involved in the processing and regular turnover of intracellular proteins. Catalyzes the removal of unsubstituted N-terminal amino acids from various peptides. This Serratia proteamaculans (strain 568) protein is Probable cytosol aminopeptidase.